A 230-amino-acid polypeptide reads, in one-letter code: Dephospho-CoA kinase (230 aa).

A DPCK domain is found at 3–206; that stretch reads LVGLTGGIAS…EPLTWKERLR (204 aa). Position 8 to 15 (8 to 15) interacts with ATP; it reads GGIASGKS.

Belongs to the CoaE family.

The catalysed reaction is 3'-dephospho-CoA + ATP = ADP + CoA + H(+). It participates in cofactor biosynthesis; coenzyme A biosynthesis; CoA from (R)-pantothenate: step 5/5. Functionally, catalyzes the phosphorylation of the 3'-hydroxyl group of dephosphocoenzyme A to form coenzyme A. The protein is Dephospho-CoA kinase of Oryza sativa subsp. japonica (Rice).